We begin with the raw amino-acid sequence, 347 residues long: Toluene-4-sulfonate monooxygenase system iron-sulfur subunit TsaM1 (347 aa).

The region spanning tryptophan 7–isoleucine 109 is the Rieske domain. The [2Fe-2S] cluster site is built by cysteine 48, histidine 50, cysteine 67, and histidine 70.

In terms of assembly, homotetramer. Part of the p-toluenesulfonate methyl-monooxygenase complex TsaBM, comprising the reductase TsaB and the oxygenase TsaM. Requires [2Fe-2S] cluster as cofactor.

It catalyses the reaction toluene-4-sulfonate + NADH + O2 + H(+) = 4-(hydroxymethyl)benzenesulfonate + NAD(+) + H2O. In terms of biological role, involved in the toluene-4-sulfonate degradation pathway. Does not discriminate between the sulfonate and the carboxyl substituents and can also be involved in the p-toluenecarboxylate degradation pathway. Can use toluene-4-sulfonate, p-toluate, m-toluate and 4-ethylbenzoate as substrates, but not p-xylene, toluene and p-cresol. Also catalyzes the demethylation of 4-methoxybenzoate to 4-hydroxybenzoate. This chain is Toluene-4-sulfonate monooxygenase system iron-sulfur subunit TsaM1 (tsaM1), found in Comamonas testosteroni (Pseudomonas testosteroni).